The following is a 624-amino-acid chain: Chaperone protein HtpG (624 aa).

Residues 1–336 (MKGQETRGFQ…SNDLPLNVSR (336 aa)) form an a; substrate-binding region. Residues 337–552 (EILQDSTVTR…ADEMSTQMAK (216 aa)) form a b region. The interval 553–624 (LFAAAGQSVP…IRRMNQLLVS (72 aa)) is c.

It belongs to the heat shock protein 90 family. As to quaternary structure, homodimer. Post-translationally, UMPylated on a histidine residue by YdiU under ATP-limited conditions.

It localises to the cytoplasm. UMPylation of the chaperone by YdiU negatively regulates its activity, facilitating Salmonella survival under ATP-limited conditions. In terms of biological role, molecular chaperone. Has ATPase activity. This chain is Chaperone protein HtpG, found in Salmonella typhimurium (strain LT2 / SGSC1412 / ATCC 700720).